The chain runs to 106 residues: MAQAFVNSKIQPGKVVVFIKPTCPFCRKTQELLSQLPFKEGLLEFVDITATSDTNEIQDYLQQLTGARTVPRVFIGKECIGGCTDLESMHKRGELLTRLQQIGALK.

A2 is subject to N-acetylalanine. Positions 3–106 constitute a Glutaredoxin domain; sequence QAFVNSKIQP…TRLQQIGALK (104 aa). At K9 the chain carries N6-succinyllysine. 2 disulfide bridges follow: C23-C26 and C79-C83.

This sequence belongs to the glutaredoxin family.

The protein localises to the cytoplasm. In terms of biological role, has a glutathione-disulfide oxidoreductase activity in the presence of NADPH and glutathione reductase. Reduces low molecular weight disulfides and proteins. The sequence is that of Glutaredoxin-1 (GLRX) from Sus scrofa (Pig).